We begin with the raw amino-acid sequence, 730 residues long: ATP-binding cassette sub-family D member 1 (730 aa).

4 consecutive transmembrane segments (helical) span residues 24–44 (AFSY…VTIP), 137–157 (FCLI…GALV), 169–189 (ALVL…NSMI), and 276–296 (ANII…AHIL). An ABC transmembrane type-1 domain is found at 136–373 (TFCLISRTFL…WFIMLEQFFM (238 aa)). The ABC transporter domain occupies 505–727 (ISLRAVPVVT…MNSDEEQKGQ (223 aa)). 538–545 (GPNGCGKS) is an ATP binding site.

It belongs to the ABC transporter superfamily. ABCD family. Peroxisomal fatty acyl CoA transporter (TC 3.A.1.203) subfamily.

The protein localises to the peroxisome membrane. The enzyme catalyses an acyl-CoA(out) + ATP + H2O = an acyl-CoA(in) + ADP + phosphate + H(+). Its function is as follows. Plays a role in the transport of free very-long-chain fatty acids (VLCFAs) as well as their CoA-esters across the peroxisomal membrane by acting as an ATP-specific binding subunit releasing ADP after ATP hydrolysis. Thus, plays a role in regulation of VLCFAs and energy metabolism namely, in the degradation and biosynthesis of fatty acids by beta-oxidation, mitochondrial function and microsomal fatty acid elongation. In Drosophila melanogaster (Fruit fly), this protein is ATP-binding cassette sub-family D member 1.